A 264-amino-acid chain; its full sequence is Ribosomal protein L11 methyltransferase (264 aa).

The S-adenosyl-L-methionine site is built by Thr116, Gly137, Asp159, and Asn200.

Belongs to the methyltransferase superfamily. PrmA family.

It is found in the cytoplasm. It catalyses the reaction L-lysyl-[protein] + 3 S-adenosyl-L-methionine = N(6),N(6),N(6)-trimethyl-L-lysyl-[protein] + 3 S-adenosyl-L-homocysteine + 3 H(+). Methylates ribosomal protein L11. The protein is Ribosomal protein L11 methyltransferase of Thermotoga maritima (strain ATCC 43589 / DSM 3109 / JCM 10099 / NBRC 100826 / MSB8).